The chain runs to 193 residues: Holliday junction branch migration complex subunit RuvA (193 aa).

The domain I stretch occupies residues 1–64 (MIGRIAGILL…EDANLLYGFL (64 aa)). The segment at 65 to 139 (TPQERTTFRE…GKLGADLGEL (75 aa)) is domain II. The interval 139–143 (LAGAA) is flexible linker. The tract at residues 144 to 193 (SPSDHATDILNALLALGYSEKEGLAAIKNVPAGTGVSEGIKLALKALSKV) is domain III.

Belongs to the RuvA family. In terms of assembly, homotetramer. Forms an RuvA(8)-RuvB(12)-Holliday junction (HJ) complex. HJ DNA is sandwiched between 2 RuvA tetramers; dsDNA enters through RuvA and exits via RuvB. An RuvB hexamer assembles on each DNA strand where it exits the tetramer. Each RuvB hexamer is contacted by two RuvA subunits (via domain III) on 2 adjacent RuvB subunits; this complex drives branch migration. In the full resolvosome a probable DNA-RuvA(4)-RuvB(12)-RuvC(2) complex forms which resolves the HJ.

It localises to the cytoplasm. Functionally, the RuvA-RuvB-RuvC complex processes Holliday junction (HJ) DNA during genetic recombination and DNA repair, while the RuvA-RuvB complex plays an important role in the rescue of blocked DNA replication forks via replication fork reversal (RFR). RuvA specifically binds to HJ cruciform DNA, conferring on it an open structure. The RuvB hexamer acts as an ATP-dependent pump, pulling dsDNA into and through the RuvAB complex. HJ branch migration allows RuvC to scan DNA until it finds its consensus sequence, where it cleaves and resolves the cruciform DNA. The protein is Holliday junction branch migration complex subunit RuvA of Burkholderia lata (strain ATCC 17760 / DSM 23089 / LMG 22485 / NCIMB 9086 / R18194 / 383).